Here is a 1221-residue protein sequence, read N- to C-terminus: RNA exonuclease 1 homolog (1221 aa).

Gly residues predominate over residues 37-46 (RGSGAPGDGG). The disordered stretch occupies residues 37–75 (RGSGAPGDGGEAPPAAGLGYDPYNPELPKPPAQRENGTL). Positions 86–115 (LELELVNQAIEAVRSEVELEQRRYRELLET) form a coiled coil. The tract at residues 116 to 598 (TREHRSAEAP…STSSAGADVD (483 aa)) is disordered. At Arg191 the chain carries Omega-N-methylarginine. 3 positions are modified to phosphoserine: Ser287, Ser289, and Ser358. A compositionally biased stretch (low complexity) spans 357–369 (ASPAQVQSSQDGG). Over residues 393–417 (AQGKDKTKDKGRGRPVEKPRADKKG) the composition is skewed to basic and acidic residues. Residues Ser459, Ser499, and Ser526 each carry the phosphoserine modification. Residues 492 to 501 (LVERKARSLD) are compositionally biased toward basic and acidic residues. An interaction with ELOA region spans residues 498–577 (RSLDEGASQD…KRLKASPPPS (80 aa)). Residues 580–593 (PSSSSSSSSSTSSA) are compositionally biased toward low complexity. Ser610 is modified (phosphoserine). Disordered regions lie at residues 619–692 (IFNE…TAQE) and 735–775 (HIPN…TRTL). A compositionally biased stretch (basic and acidic residues) spans 627–648 (KTEDRGRLARQPPKEEKSEEKG). Position 914 is a phosphoserine (Ser914). Residues 1060 to 1209 (IYALDCEMSY…EDAGACMHLV (150 aa)) form the Exonuclease domain.

The protein belongs to the REXO1/REXO3 family. Interacts with TCEA2 and ELOA. As to expression, ubiquitously expressed.

It is found in the nucleus. Functionally, seems to have no detectable effect on transcription elongation in vitro. This chain is RNA exonuclease 1 homolog (REXO1), found in Homo sapiens (Human).